We begin with the raw amino-acid sequence, 377 residues long: Lactosylceramide 1,3-N-acetyl-beta-D-glucosaminyltransferase (377 aa).

Residues 1-14 are Cytoplasmic-facing; that stretch reads MRVFVSSRRVKRWQ. A helical; Signal-anchor for type II membrane protein membrane pass occupies residues 15–35; that stretch reads FFHLFAICFILSFMVFWGPIN. The Lumenal portion of the chain corresponds to 36 to 377; that stretch reads NYIMSHMKSY…NSYPCRAAFA (342 aa). The N-linked (GlcNAc...) asparagine glycan is linked to Asn-58.

Belongs to the glycosyltransferase 31 family.

The protein localises to the golgi apparatus membrane. It carries out the reaction a beta-D-Gal-(1-&gt;4)-beta-D-Glc-(1&lt;-&gt;1)-Cer(d18:1(4E)) + UDP-N-acetyl-alpha-D-glucosamine = a beta-D-GlcNAc-(1-&gt;3)-beta-D-Gal-(1-&gt;4)-beta-D-Glc-(1&lt;-&gt;1)-Cer(d18:1(4E)) + UDP + H(+). The catalysed reaction is a neolactoside nLc4Cer(d18:1(4E)) + UDP-N-acetyl-alpha-D-glucosamine = a neolactoside IV(3)-beta-GlcNAc-nLc4Cer(d18:1(4E)) + UDP + H(+). Its pathway is protein modification; protein glycosylation. Its function is as follows. Beta-1,3-N-acetylglucosaminyltransferase that plays a key role in the synthesis of lacto- or neolacto-series carbohydrate chains on glycolipids, notably by participating in biosynthesis of HNK-1 and Lewis X carbohydrate structures. Has strong activity toward lactosylceramide (LacCer) and neolactotetraosylceramide (nLc(4)Cer; paragloboside), resulting in the synthesis of Lc(3)Cer and neolactopentaosylceramide (nLc(5)Cer), respectively. Probably plays a central role in regulating neolacto-series glycolipid synthesis during embryonic development. This is Lactosylceramide 1,3-N-acetyl-beta-D-glucosaminyltransferase from Rattus norvegicus (Rat).